Here is a 161-residue protein sequence, read N- to C-terminus: Protein-export protein SecB (161 aa).

Belongs to the SecB family. Homotetramer, a dimer of dimers. One homotetramer interacts with 1 SecA dimer.

The protein resides in the cytoplasm. Its function is as follows. One of the proteins required for the normal export of preproteins out of the cell cytoplasm. It is a molecular chaperone that binds to a subset of precursor proteins, maintaining them in a translocation-competent state. It also specifically binds to its receptor SecA. In Ectopseudomonas mendocina (strain ymp) (Pseudomonas mendocina), this protein is Protein-export protein SecB.